We begin with the raw amino-acid sequence, 419 residues long: Putative L-glutamine:3-amino-2,3-dideoxy-scyllo-inosose aminotransferase (419 aa).

The residue at position 199 (lysine 199) is an N6-(pyridoxal phosphate)lysine.

The protein belongs to the DegT/DnrJ/EryC1 family. L-glutamine:2-deoxy-scyllo-inosose/scyllo-inosose aminotransferase subfamily. Pyridoxal 5'-phosphate serves as cofactor.

The enzyme catalyses 3-amino-2,3-dideoxy-scyllo-inosose + L-glutamine = 2-deoxystreptamine + 2-oxoglutaramate. Its pathway is metabolic intermediate biosynthesis; 2-deoxystreptamine biosynthesis; 2-deoxystreptamine from D-glucose 6-phosphate: step 4/4. It participates in antibiotic biosynthesis; kanamycin biosynthesis. Catalyzes the transamination of 3-amino-2,3-dideoxy-scyllo-inosose (amino-DOI) into 2-deoxystreptamine (DOS). The polypeptide is Putative L-glutamine:3-amino-2,3-dideoxy-scyllo-inosose aminotransferase (kanD) (Streptomyces kanamyceticus).